We begin with the raw amino-acid sequence, 21 residues long: Glucan endo-1,3-beta-glucosidase 2 (21 aa).

A disordered region spans residues 1–21 (APGDLLWSDEFDGAAGSAPNP).

It catalyses the reaction Hydrolysis of (1-&gt;3)-beta-D-glucosidic linkages in (1-&gt;3)-beta-D-glucans.. This is Glucan endo-1,3-beta-glucosidase 2 from Papiliotrema laurentii (Cryptococcus laurentii).